The following is a 170-amino-acid chain: MNLRDYIRDIPDFPKEGIVYFDITPLLAEPKAFQYTIDQLAERFADYKIDKIAAAEARGFIFGAPLATKLDIGFVPIRKPGKLPYETISVSYDLEYGTDNLSMHVDAVAKDENVLLIDDVLATGGTAEGMVKLVEKAGGKVSGMGFIAELTFLDGKSKLSGIDTTSLIQL.

This sequence belongs to the purine/pyrimidine phosphoribosyltransferase family. In terms of assembly, homodimer.

The protein localises to the cytoplasm. It carries out the reaction AMP + diphosphate = 5-phospho-alpha-D-ribose 1-diphosphate + adenine. The protein operates within purine metabolism; AMP biosynthesis via salvage pathway; AMP from adenine: step 1/1. In terms of biological role, catalyzes a salvage reaction resulting in the formation of AMP, that is energically less costly than de novo synthesis. The polypeptide is Adenine phosphoribosyltransferase (Maridesulfovibrio salexigens (strain ATCC 14822 / DSM 2638 / NCIMB 8403 / VKM B-1763) (Desulfovibrio salexigens)).